The primary structure comprises 212 residues: ATP-dependent dethiobiotin synthetase BioD (212 aa).

An ATP-binding site is contributed by 12 to 17; it reads DCGKTF. Mg(2+) is bound at residue Thr-16. Residue Lys-33 is part of the active site. Ser-37 is a binding site for substrate. ATP is bound by residues Asp-50, 110 to 113, and 170 to 171; these read EGAG and NC. Asp-50 and Glu-110 together coordinate Mg(2+).

It belongs to the dethiobiotin synthetase family. Homodimer. Mg(2+) serves as cofactor.

The protein resides in the cytoplasm. It catalyses the reaction (7R,8S)-7,8-diammoniononanoate + CO2 + ATP = (4R,5S)-dethiobiotin + ADP + phosphate + 3 H(+). The protein operates within cofactor biosynthesis; biotin biosynthesis; biotin from 7,8-diaminononanoate: step 1/2. In terms of biological role, catalyzes a mechanistically unusual reaction, the ATP-dependent insertion of CO2 between the N7 and N8 nitrogen atoms of 7,8-diaminopelargonic acid (DAPA, also called 7,8-diammoniononanoate) to form a ureido ring. This is ATP-dependent dethiobiotin synthetase BioD from Legionella pneumophila (strain Corby).